Consider the following 355-residue polypeptide: MYYDDGIPVFDSLDKLTKPNSMKVVSSDSSEKGDIVLEPLESGFALTLGNALRRVMLSSLIGSAVYGIKIDGITHEFTSIQGVREDVTDIVLNMGMLRCKLNGTSNKCLSLSAKGPCQVLAGMIETDDQCSIVNKDLLICTLGQDVELNMTIYVASGKGYLPVTKYKENEFLKPMNEQDLISFIPVNALYSPINRVSYRVENSRVGQVTDKDKLILSVETDGTISPSQAVDSAARILQEQLQPFISSDISYKKSQVSSPSGYKDLGYDPILLRKVDEMELSVRSHNCLKNENITYIGDLVQKTESEMLRTANFGRKSLNEIKAVLNNFGLSLGMDIPDWPPKDIDELARQHTDED.

Residues 1 to 248 (MYYDDGIPVF…EQLQPFISSD (248 aa)) form an alpha N-terminal domain (alpha-NTD) region. The segment at 267 to 355 (YDPILLRKVD…ELARQHTDED (89 aa)) is alpha C-terminal domain (alpha-CTD).

The protein belongs to the RNA polymerase alpha chain family. Homodimer. The RNAP catalytic core consists of 2 alpha, 1 beta, 1 beta' and 1 omega subunit. When a sigma factor is associated with the core the holoenzyme is formed, which can initiate transcription.

It carries out the reaction RNA(n) + a ribonucleoside 5'-triphosphate = RNA(n+1) + diphosphate. Its function is as follows. DNA-dependent RNA polymerase catalyzes the transcription of DNA into RNA using the four ribonucleoside triphosphates as substrates. The polypeptide is DNA-directed RNA polymerase subunit alpha (Wolbachia sp. subsp. Brugia malayi (strain TRS)).